A 433-amino-acid chain; its full sequence is Histidinol dehydrogenase 2 (433 aa).

Residues Y130, Q192, and N215 each contribute to the NAD(+) site. Substrate-binding residues include S238, Q260, and H263. Positions 260 and 263 each coordinate Zn(2+). Active-site proton acceptor residues include E328 and H329. Positions 329, 362, 416, and 421 each coordinate substrate. D362 provides a ligand contact to Zn(2+). H421 contacts Zn(2+).

It belongs to the histidinol dehydrogenase family. It depends on Zn(2+) as a cofactor.

The catalysed reaction is L-histidinol + 2 NAD(+) + H2O = L-histidine + 2 NADH + 3 H(+). Its pathway is amino-acid biosynthesis; L-histidine biosynthesis; L-histidine from 5-phospho-alpha-D-ribose 1-diphosphate: step 9/9. In terms of biological role, catalyzes the sequential NAD-dependent oxidations of L-histidinol to L-histidinaldehyde and then to L-histidine. The protein is Histidinol dehydrogenase 2 (hisD2) of Nostoc sp. (strain PCC 7120 / SAG 25.82 / UTEX 2576).